We begin with the raw amino-acid sequence, 208 residues long: N-(5'-phosphoribosyl)anthranilate isomerase (208 aa).

The protein belongs to the TrpF family.

The enzyme catalyses N-(5-phospho-beta-D-ribosyl)anthranilate = 1-(2-carboxyphenylamino)-1-deoxy-D-ribulose 5-phosphate. Its pathway is amino-acid biosynthesis; L-tryptophan biosynthesis; L-tryptophan from chorismate: step 3/5. This is N-(5'-phosphoribosyl)anthranilate isomerase from Desulforamulus reducens (strain ATCC BAA-1160 / DSM 100696 / MI-1) (Desulfotomaculum reducens).